We begin with the raw amino-acid sequence, 735 residues long: E3 ubiquitin-protein ligase SH3RF2 (735 aa).

The RING-type zinc finger occupies C12–R53. SH3 domains lie at D125 to Q184 and Q187 to S252. Disordered regions lie at residues S260–Q301 and T335–M373. Residues L273–R289 show a composition bias toward polar residues. Residues M373–A466 are interaction with PAK4. An SH3 3 domain is found at L383–S444. Disordered stretches follow at residues V472–S534, E612–N637, and V649–K735. Residues R523–S534 are compositionally biased toward polar residues. The segment covering S617 to A627 has biased composition (pro residues). The tract at residues K647 to Q652 is interaction with PPP1CA. S655 is modified (phosphoserine). Residues F715–K735 are compositionally biased toward polar residues.

The protein belongs to the SH3RF family. In terms of assembly, interacts with FASLG and PPP1CA. Interacts with PAK4 and TNFRSF1A. Interacts with DLK1, MAP3K10, MAPK8IP1/JIP1, MAPK8IP2/JIP2 and MAPK8IP3/JIP3. Interacts with RAC1 (both active GTP- or inactive GDP-bound forms). Post-translationally, autoubiquitinated.

The protein resides in the nucleus. The catalysed reaction is S-ubiquitinyl-[E2 ubiquitin-conjugating enzyme]-L-cysteine + [acceptor protein]-L-lysine = [E2 ubiquitin-conjugating enzyme]-L-cysteine + N(6)-ubiquitinyl-[acceptor protein]-L-lysine.. The protein operates within protein modification; protein ubiquitination. Its function is as follows. Has E3 ubiquitin-protein ligase activity. Acts as an anti-apoptotic regulator of the JNK pathway by ubiquitinating and promoting the degradation of SH3RF1, a scaffold protein that is required for pro-apoptotic JNK activation. Facilitates TNF-alpha-mediated recruitment of adapter proteins TRADD and RIPK1 to TNFRSF1A and regulates PAK4 protein stability via inhibition of its ubiquitin-mediated proteasomal degradation. Inhibits PPP1CA phosphatase activity. This chain is E3 ubiquitin-protein ligase SH3RF2 (Sh3rf2), found in Rattus norvegicus (Rat).